The chain runs to 137 residues: Small ribosomal subunit protein uS9 (137 aa).

Positions 106-117 are enriched in basic and acidic residues; the sequence is KTEGYLTRDPRA. The disordered stretch occupies residues 106-137; it reads KTEGYLTRDPRAKERRKYGLRKARKAPQYSKR. The span at 118–137 shows a compositional bias: basic residues; that stretch reads KERRKYGLRKARKAPQYSKR.

This sequence belongs to the universal ribosomal protein uS9 family.

This chain is Small ribosomal subunit protein uS9, found in Thermosynechococcus vestitus (strain NIES-2133 / IAM M-273 / BP-1).